We begin with the raw amino-acid sequence, 307 residues long: UDP-N-acetylenolpyruvoylglucosamine reductase (307 aa).

Positions 33–197 (TGGNADFYIT…LEAAFTLAPG (165 aa)) constitute an FAD-binding PCMH-type domain. Residue Arg-176 is part of the active site. Ser-226 acts as the Proton donor in catalysis. Residue Glu-296 is part of the active site.

Belongs to the MurB family. FAD serves as cofactor.

It is found in the cytoplasm. The catalysed reaction is UDP-N-acetyl-alpha-D-muramate + NADP(+) = UDP-N-acetyl-3-O-(1-carboxyvinyl)-alpha-D-glucosamine + NADPH + H(+). Its pathway is cell wall biogenesis; peptidoglycan biosynthesis. Its function is as follows. Cell wall formation. The polypeptide is UDP-N-acetylenolpyruvoylglucosamine reductase (Staphylococcus aureus (strain COL)).